Reading from the N-terminus, the 207-residue chain is Casparian strip membrane protein 1 (207 aa).

Polar residues predominate over residues 1-12 (MEGESTAVNITE). Positions 1 to 24 (MEGESTAVNITETPKERKGKAPLL) are disordered. At 1–48 (MEGESTAVNITETPKERKGKAPLLAPPPASGGIKTIVQKAPKGGYKRG) the chain is on the cytoplasmic side. Residues 49–69 (LAVFDVVLRIAGIAAALGAVI) form a helical membrane-spanning segment. Topologically, residues 70–98 (AMGSTDQTLPFFTQFFQFKAEFDDLPVFT) are extracellular. The helical transmembrane segment at 99 to 119 (FFVIANAITAAYLALSIPISI) threads the bilayer. Over 120 to 138 (VCIIRPHLVGPRVLLTFLD) the chain is Cytoplasmic. The chain crosses the membrane as a helical span at residues 139 to 159 (TVMVGLTTAAAGGAASIVYLA). The Extracellular portion of the chain corresponds to 160-184 (HNGNSDANWPAICQQFNDFCQEVSG). Residues 185–205 (AVVASFITVVVLMFLIVLSAF) traverse the membrane as a helical segment. At 206–207 (SL) the chain is on the cytoplasmic side.

It belongs to the Casparian strip membrane proteins (CASP) family. As to quaternary structure, homodimer and heterodimers.

It localises to the cell membrane. In terms of biological role, regulates membrane-cell wall junctions and localized cell wall deposition. Required for establishment of the Casparian strip membrane domain (CSD) and the subsequent formation of Casparian strips, a cell wall modification of the root endodermis that determines an apoplastic barrier between the intraorganismal apoplasm and the extraorganismal apoplasm and prevents lateral diffusion. The protein is Casparian strip membrane protein 1 of Taraxacum kok-saghyz (Russian dandelion).